A 188-amino-acid chain; its full sequence is Molybdopterin synthase catalytic subunit (188 aa).

At Ser-20 the chain carries Phosphoserine. Residues 143–144, Lys-159, and 166–168 contribute to the substrate site; these read HR and KKE.

The protein belongs to the MoaE family. MOCS2B subfamily. Heterotetramer; composed of 2 small (MOCS2A) and 2 large (MOCS2B) subunits. As to expression, highest levels are found in heart and skeletal muscle. Lower levels are present in brain, kidney and pancreas. Very low levels are found in lung and peripheral blood leukocytes.

It localises to the cytoplasm. The protein localises to the cytosol. It catalyses the reaction 2 [molybdopterin-synthase sulfur-carrier protein]-C-terminal-Gly-aminoethanethioate + cyclic pyranopterin phosphate + H2O = molybdopterin + 2 [molybdopterin-synthase sulfur-carrier protein]-C-terminal Gly-Gly + 2 H(+). The protein operates within cofactor biosynthesis; molybdopterin biosynthesis. Functionally, catalytic subunit of the molybdopterin synthase complex, a complex that catalyzes the conversion of precursor Z into molybdopterin. Acts by mediating the incorporation of 2 sulfur atoms from thiocarboxylated MOCS2A into precursor Z to generate a dithiolene group. This Homo sapiens (Human) protein is Molybdopterin synthase catalytic subunit.